The sequence spans 211 residues: tRNA (guanine-N(7)-)-methyltransferase (211 aa).

Residues Glu44, Asp69, Asp96, and Asp118 each coordinate S-adenosyl-L-methionine. Asp118 is a catalytic residue. Lys122 contributes to the substrate binding site. Residues 124 to 129 (RHEKRR) are interaction with RNA. Substrate-binding positions include Asp154 and 191–194 (TEYE).

This sequence belongs to the class I-like SAM-binding methyltransferase superfamily. TrmB family.

The enzyme catalyses guanosine(46) in tRNA + S-adenosyl-L-methionine = N(7)-methylguanosine(46) in tRNA + S-adenosyl-L-homocysteine. It functions in the pathway tRNA modification; N(7)-methylguanine-tRNA biosynthesis. In terms of biological role, catalyzes the formation of N(7)-methylguanine at position 46 (m7G46) in tRNA. The polypeptide is tRNA (guanine-N(7)-)-methyltransferase (Streptococcus pneumoniae (strain JJA)).